An 815-amino-acid polypeptide reads, in one-letter code: Cell division control protein 53 (815 aa).

Residues 9-280 form a required for interaction with SKP1/CBF3D and F-box protein region; it reads DDLEATWNFI…WDDHTKKPLS (272 aa). The required for interaction with CDC34/UBC3 stretch occupies residues 448 to 748; it reads KKATKPEVAS…IEKELNTERQ (301 aa). Residues 746 to 807 enclose the Cullin neddylation domain; sequence ERQIFLEACI…QKGYLQRGDD (62 aa). Lysine 760 participates in a covalent cross-link: Glycyl lysine isopeptide (Lys-Gly) (interchain with G-Cter in NEDD8).

It belongs to the cullin family. As to quaternary structure, component of multiple SCF (SKP1-CUL1-F-box) E3 ubiquitin-protein ligase complexes formed of CUL1, SKP1/HRT1, RBX1 and a variable F-box domain-containing protein as substrate-specific adapter. Component of the SCF(CDC4) complex containing CDC4. Component of the SCF(MET30) complex containing MET30. Component of the SCF(GRR1) complex containing GRR1. Component of the probable SCF(DIA2) complex containing DIA2. Component of the probable SCF(YDR131C) complex containing YDR131C. Component of the probable SCF(YDR306C) complex containing YDR306C. Component of the probable SCF(YLR224W) complex containing YLR224W. Component of the probable SCF(YJL149W) complex containing YJL149W. Component of the probable SCF(YNL311C) complex containing YNL311C. Component of the probable SCF(MDM30) complex containing MDM30. Component of the probable SCF(UFO1) complex containing UFO1. Component of the probable SCF(HRT3) complex containing HRT3. Component of the probable SCF(YBR280C) complex containing YBR280C. Component of the probable SCF(YBR352W) complex containing YBR352W. Interacts with DCN1, YBR280C, YLR224W and YLR352W. The unneddylated form interacts with LAG2/CAND1 and the interaction mediates the exchange of the F-box substrate-specific subunit. Post-translationally, neddylated; enhancing the ubiquitin-ligase activity.

Its subcellular location is the cytoplasm. The protein resides in the nucleus. In terms of biological role, core component of multiple cullin-RING-based SCF (SKP1-CUL1-F-box) E3 ubiquitin-protein ligase complexes which mediate the ubiquitination and subsequent proteasomal degradation of target proteins. As a scaffold protein may contribute to catalysis through positioning of the substrate and the ubiquitin-conjugating enzyme. The SCF complex associates with CDC34 as the E2 ubiquitin-conjugating enzyme. The functional specificity of the SCF complex depends on the type of F-box protein. SCF(CDC4) controls the G1-to-S phase transition; it directs ubiquitination of the phosphorylated CDK inhibitor SIC1 and of CDC6. SCF(CDC4) directs ubiquitination of GCN4. SCF(GRR1) directs ubiquitination of phosphorylated CLN1, CLN2 and GIC2. SCF(MET30) directs ubiquitination of MET4. SCF(DIA2) is specifically involved in the pheromone induced degradation of phosphorylated TEC1. SCF(MDM30) seems to direct ubiquitination of FZ01. Involved in the regulation of methionine biosynthesis genes. In Saccharomyces cerevisiae (strain ATCC 204508 / S288c) (Baker's yeast), this protein is Cell division control protein 53 (CDC53).